The sequence spans 114 residues: NADH-quinone oxidoreductase subunit K 2 (114 aa).

3 consecutive transmembrane segments (helical) span residues 1–21 (MIVP…LGVF), 29–49 (LIMI…AFIG), and 62–82 (FVLF…AIIV).

It belongs to the complex I subunit 4L family. NDH-1 is composed of 14 different subunits. Subunits NuoA, H, J, K, L, M, N constitute the membrane sector of the complex.

The protein localises to the cell inner membrane. It carries out the reaction a quinone + NADH + 5 H(+)(in) = a quinol + NAD(+) + 4 H(+)(out). Functionally, NDH-1 shuttles electrons from NADH, via FMN and iron-sulfur (Fe-S) centers, to quinones in the respiratory chain. The immediate electron acceptor for the enzyme in this species is believed to be ubiquinone. Couples the redox reaction to proton translocation (for every two electrons transferred, four hydrogen ions are translocated across the cytoplasmic membrane), and thus conserves the redox energy in a proton gradient. The sequence is that of NADH-quinone oxidoreductase subunit K 2 from Syntrophobacter fumaroxidans (strain DSM 10017 / MPOB).